We begin with the raw amino-acid sequence, 1066 residues long: Phosphatidylinositol 4-kinase PIK1 (1066 aa).

Positions 1–133 (MHKASSSKKS…GFQVARRVLN (133 aa)) constitute a PIK helical domain. Ser10 and Ser236 each carry phosphoserine. 3 disordered regions span residues 218–240 (KKTS…PIDL), 303–411 (DGKN…KKAN), and 564–624 (NENR…LGDM). The segment covering 342–356 (NNEDETGGETEEDAD) has biased composition (acidic residues). 2 stretches are compositionally biased toward polar residues: residues 374–411 (QPRT…KKAN) and 570–597 (STLT…NEGL). A Phosphoserine modification is found at Ser384. Residue Thr394 is modified to Phosphothreonine. Ser396 and Ser592 each carry phosphoserine. Low complexity predominate over residues 598–609 (SSTSRSDSASTA). The 280-residue stretch at 770 to 1049 (ATKKERIRKT…FLIGKSLGSI (280 aa)) folds into the PI3K/PI4K catalytic domain. The interval 776-782 (IRKTSEY) is G-loop. Residues 915 to 923 (QVKDRHNGN) are catalytic loop. Residues 934-958 (HIDFGFMLSNSPGSVGFEAAPFKLT) are activation loop.

This sequence belongs to the PI3/PI4-kinase family. Type III PI4K subfamily. In terms of assembly, interacts with FRQ1.

The protein localises to the nucleus. It localises to the golgi apparatus. Its subcellular location is the trans-Golgi network. It carries out the reaction a 1,2-diacyl-sn-glycero-3-phospho-(1D-myo-inositol) + ATP = a 1,2-diacyl-sn-glycero-3-phospho-(1D-myo-inositol 4-phosphate) + ADP + H(+). Acts on phosphatidylinositol (PI) in the first committed step in the production of the second messenger inositol 1,4,5,-trisphosphate. PIK1 is part of a nuclear phosphoinositide cycle and could control cytokinesis through the actin cytoskeleton. Involved in the response to mating pheromone. The polypeptide is Phosphatidylinositol 4-kinase PIK1 (Saccharomyces cerevisiae (strain ATCC 204508 / S288c) (Baker's yeast)).